The sequence spans 153 residues: Regulatory protein RecX (153 aa).

Belongs to the RecX family.

The protein resides in the cytoplasm. Functionally, modulates RecA activity. The protein is Regulatory protein RecX of Mannheimia succiniciproducens (strain KCTC 0769BP / MBEL55E).